A 2104-amino-acid chain; its full sequence is Myosin type-2 heavy chain 2 (2104 aa).

A Myosin N-terminal SH3-like domain is found at 35 to 85 (DERTWIWIPDSKESFVKAWIVEDLGEKYRVKLERDGSERIVDGFDAEKVNP). The Myosin motor domain occupies 89-767 (DMVDDMAALT…VLGSLEDRRN (679 aa)). 182-189 (GESGAGKT) is a binding site for ATP. Residues 646 to 660 (LSSLMHQLEATQPHF) are actin-binding. Residues 829-2104 (LGTTQTDEYL…RSNRSPSVLR (1276 aa)) adopt a coiled-coil conformation. 2 disordered regions span residues 1245 to 1278 (NRSV…DGNN) and 1398 to 1426 (MEFT…SKRS). The span at 1246–1259 (RSVTQHTLDGNSPH) shows a compositional bias: polar residues. Positions 1261-1278 (SFEEKHSGDPLKRIDGNN) are enriched in basic and acidic residues. Over residues 1409 to 1424 (SKISNLPSSQPGSPSK) the composition is skewed to polar residues. At S1421 the chain carries Phosphoserine.

Belongs to the TRAFAC class myosin-kinesin ATPase superfamily. Myosin family. As to quaternary structure, binds to cdc4 and rlc1.

In terms of biological role, stabilizes the F-actin cables forming the F-actin ring that surrounds the nucleus during interphase. May work in conjunction with myo2. The polypeptide is Myosin type-2 heavy chain 2 (myo3) (Schizosaccharomyces pombe (strain 972 / ATCC 24843) (Fission yeast)).